The primary structure comprises 643 residues: Nicastrin (643 aa).

Positions 1 to 20 (MRFKNVLVLLLLLVFSVINS) are cleaved as a signal peptide. The Extracellular portion of the chain corresponds to 21–611 (EPSAPATISD…VFKIGNSTTE (591 aa)). The cysteines at positions 42 and 54 are disulfide-linked. Residues Asn-96 and Asn-166 are each glycosylated (N-linked (GlcNAc...) asparagine). 2 disulfide bridges follow: Cys-204–Cys-210 and Cys-308–Cys-318. N-linked (GlcNAc...) asparagine glycans are attached at residues Asn-333 and Asn-385. Disulfide bonds link Cys-479–Cys-486, Cys-540–Cys-551, and Cys-546–Cys-556. Residue Asn-584 is glycosylated (N-linked (GlcNAc...) asparagine). Residues 612-632 (IWFLVSGLIELLVSIGLILYV) form a helical membrane-spanning segment. The Cytoplasmic segment spans residues 633–643 (KKFLSNRYKLL).

This sequence belongs to the nicastrin family. As to quaternary structure, component of the gamma-secretase complex, a complex composed of a presenilin homodimer, nicastrin, aph1 and pen2.

The protein localises to the membrane. Essential subunit of the gamma-secretase complex, an endoprotease complex that catalyzes the intramembrane cleavage of integral membrane proteins such as Notch receptors and APP (amyloid-beta precursor protein). This chain is Nicastrin, found in Dictyostelium purpureum (Slime mold).